The following is a 1307-amino-acid chain: Histone-lysine N-methyltransferase SETDB1 (1307 aa).

Residues valine 30–glutamate 65 are a coiled coil. Residues serine 112 and serine 117 each carry the phosphoserine modification. Threonine 120 bears the Phosphothreonine mark. Positions aspartate 127–glutamine 148 are disordered. Lysine 182 participates in a covalent cross-link: Glycyl lysine isopeptide (Lys-Gly) (interchain with G-Cter in SUMO2); alternate. Lysine 182 is covalently cross-linked (Glycyl lysine isopeptide (Lys-Gly) (interchain with G-Cter in ubiquitin); alternate). 2 consecutive Tudor domains span residues lysine 257 to threonine 320 and leucine 347 to threonine 403. Disordered regions lie at residues serine 404 to glycine 424, isoleucine 444 to glutamate 512, and serine 531 to glycine 570. Positions proline 454–serine 467 are enriched in pro residues. Polar residues predominate over residues glutamate 476–arginine 494. Residues proline 495–glutamate 512 are compositionally biased toward low complexity. The span at alanine 539–proline 565 shows a compositional bias: pro residues. Positions tyrosine 611–leucine 682 constitute an MBD domain. Residues valine 744–glycine 817 enclose the Pre-SET domain. Zn(2+) contacts are provided by cysteine 746, cysteine 748, cysteine 752, cysteine 758, cysteine 760, cysteine 798, cysteine 802, cysteine 804, and cysteine 809. One can recognise an SET domain in the interval valine 820–asparagine 1282. S-adenosyl-L-methionine contacts are provided by residues lysine 830–tryptophan 832, aspartate 868, and tyrosine 870. A Glycyl lysine isopeptide (Lys-Gly) (interchain with G-Cter in ubiquitin) cross-link involves residue lysine 884. Residues glutamate 885 to glutamine 1174 form a disordered region. A compositionally biased stretch (acidic residues) spans glutamate 913–aspartate 924. Over residues glycine 950–proline 966 the composition is skewed to basic and acidic residues. At serine 1042 the chain carries Phosphoserine. Residues phenylalanine 1048–asparagine 1066 show a composition bias toward basic and acidic residues. A Glycyl lysine isopeptide (Lys-Gly) (interchain with G-Cter in SUMO2); alternate cross-link involves residue lysine 1049. A Glycyl lysine isopeptide (Lys-Gly) (interchain with G-Cter in SUMO1); alternate cross-link involves residue lysine 1049. Glycyl lysine isopeptide (Lys-Gly) (interchain with G-Cter in SUMO2) cross-links involve residues lysine 1055 and lysine 1085. A compositionally biased stretch (polar residues) spans serine 1097–proline 1112. The span at leucine 1116–serine 1131 shows a compositional bias: low complexity. Residues glycine 1137–serine 1156 show a composition bias toward polar residues. Lysine 1165 participates in a covalent cross-link: Glycyl lysine isopeptide (Lys-Gly) (interchain with G-Cter in SUMO2). 2 positions are modified to N6,N6,N6-trimethyllysine; alternate: lysine 1186 and lysine 1194. 2 positions are modified to N6,N6-dimethyllysine; alternate: lysine 1186 and lysine 1194. Residues arginine 1236 and asparagine 1239–histidine 1240 each bind S-adenosyl-L-methionine. Cysteine 1242, cysteine 1295, cysteine 1297, and cysteine 1302 together coordinate Zn(2+). Positions lysine 1291 to leucine 1307 constitute a Post-SET domain.

The protein belongs to the class V-like SAM-binding methyltransferase superfamily. Histone-lysine methyltransferase family. Suvar3-9 subfamily. In terms of assembly, part of a complex containing at least CDYL, REST, WIZ, SETDB1, EHMT1 and EHMT2. Forms a complex with ATRX, TRIM28 and ZNF274. Probably part of a corepressor complex containing ZNF304, TRIM28, SETDB1 and DNMT1. Interacts with TRIM28/TIF1B. Interacts with ATF7IP and ATF7IP2; the interaction with ATF7IP is required to stimulate histone methyltransferase activity and facilitate the conversion of dimethylated to trimethylated H3 'Lys-9'. Interacts with MBD1; interaction is abolished when MBD1 is sumoylated. Interacts with CBX1 and CBX5. Interacts with DNMT3A and DNMT3B. Interacts with SUMO2. Interacts with MPHOSPH8. Interacts with ERG. Interacts with HDAC1, HDAC2, SIN3A, SIN3B. Interacts with ATRX. Interacts with RESF1. Interacts with ZNF638. Interacts with TASOR. Interacts with ZNF263; recruited to the SIX3 promoter along with other proteins involved in chromatin modification and transcriptional corepression where it contributes to transcriptional repression. Interacts with PHF13; the interaction probably enhances SETDB1 chromatin-associated levels and activity. Interacts with VRK1. Post-translationally, degraded by the proteasome, shielded by interaction with ATF7IP. In terms of processing, monoubiquitinated at Lys-884 by E2 enzymes UBE2E family. The conjugated-Ub is protected from deubiquitination through the SET domain. Monoubiquitination at Lys-884 is required for catalytic activity and H3K9 methylation and endogenous retrovirus silencing. In terms of tissue distribution, ubiquitously expressed. Strong expression in liver and testis. Expressed in the brain, lungs, kidneys, uterus and seminal vesicles.

Its subcellular location is the nucleus. It is found in the chromosome. The enzyme catalyses N(6),N(6)-dimethyl-L-lysyl(9)-[histone H3] + S-adenosyl-L-methionine = N(6),N(6),N(6)-trimethyl-L-lysyl(9)-[histone H3] + S-adenosyl-L-homocysteine + H(+). Functionally, histone methyltransferase that specifically trimethylates 'Lys-9' of histone H3. H3 'Lys-9' trimethylation represents a specific tag for epigenetic transcriptional repression by recruiting HP1 (CBX1, CBX3 and/or CBX5) proteins to methylated histones. Mainly functions in euchromatin regions, thereby playing a central role in the silencing of euchromatic genes. H3 'Lys-9' trimethylation is coordinated with DNA methylation. Probably forms a complex with MBD1 and ATF7IP that represses transcription and couples DNA methylation and histone 'Lys-9' trimethylation. Its activity is dependent on MBD1 and is heritably maintained through DNA replication by being recruited by CAF-1. SETDB1 is targeted to histone H3 by TRIM28/TIF1B, a factor recruited by KRAB zinc-finger proteins. Probably forms a corepressor complex required for activated KRAS-mediated promoter hypermethylation and transcriptional silencing of tumor suppressor genes (TSGs) or other tumor-related genes in colorectal cancer (CRC) cells. Required to maintain a transcriptionally repressive state of genes in undifferentiated embryonic stem cells (ESCs). In ESCs, in collaboration with TRIM28, is also required for H3K9me3 and silencing of endogenous and introduced retroviruses in a DNA-methylation independent-pathway. Associates at promoter regions of tumor suppressor genes (TSGs) leading to their gene silencing. The SETDB1-TRIM28-ZNF274 complex may play a role in recruiting ATRX to the 3'-exons of zinc-finger coding genes with atypical chromatin signatures to establish or maintain/protect H3K9me3 at these transcriptionally active regions. The protein is Histone-lysine N-methyltransferase SETDB1 of Mus musculus (Mouse).